Reading from the N-terminus, the 251-residue chain is Ubiquinone/menaquinone biosynthesis C-methyltransferase UbiE (251 aa).

S-adenosyl-L-methionine contacts are provided by residues Thr-74, Asp-95, 123 to 124 (NA), and Ser-140.

It belongs to the class I-like SAM-binding methyltransferase superfamily. MenG/UbiE family.

It carries out the reaction a 2-demethylmenaquinol + S-adenosyl-L-methionine = a menaquinol + S-adenosyl-L-homocysteine + H(+). The enzyme catalyses a 2-methoxy-6-(all-trans-polyprenyl)benzene-1,4-diol + S-adenosyl-L-methionine = a 5-methoxy-2-methyl-3-(all-trans-polyprenyl)benzene-1,4-diol + S-adenosyl-L-homocysteine + H(+). The protein operates within quinol/quinone metabolism; menaquinone biosynthesis; menaquinol from 1,4-dihydroxy-2-naphthoate: step 2/2. Its pathway is cofactor biosynthesis; ubiquinone biosynthesis. In terms of biological role, methyltransferase required for the conversion of demethylmenaquinol (DMKH2) to menaquinol (MKH2) and the conversion of 2-polyprenyl-6-methoxy-1,4-benzoquinol (DDMQH2) to 2-polyprenyl-3-methyl-6-methoxy-1,4-benzoquinol (DMQH2). In Cronobacter sakazakii (strain ATCC BAA-894) (Enterobacter sakazakii), this protein is Ubiquinone/menaquinone biosynthesis C-methyltransferase UbiE.